The primary structure comprises 437 residues: MLDKNKQIWFIGIKGTGMASLALLLHDLGYNVAGSDIEKYTFTEVPLEKVGIDIKSFNPDNIKSNEEQVIVKGNAFKEDNPEVKACLDKGVKWQSYPDTVEEIVQMHTSIGISGTHGKTSTTSLLAHVLGEVAPTSYLIGDGRGKGVDDSRFFVYEADEYRRHFLAYHPDYQIMTNIDFDHPDYFKDQDDYTSAFQSAADQTKKALFVWGDDKRLQSLKTDIPKYTYGFKDTDDFQAVDIKKTTTGSSFNVLAHGKDLGRFEIHLFGDHSILNATAVIAVAYTEKVPMDAIREGLLTFKGAKRRFSEKDFGDIAVIDDYAHHPTEMRATIQAARQKFPDKKLVVVFQPHTFSRTKKYQKDFEEILRDVDKAYITPIYASAREANGDITSEDLVKNIPGSEVIDLDNIADLTKNKNSVIVFMGAGDIPKYEDAFEKLL.

114 to 120 (GTHGKTS) is a binding site for ATP.

It belongs to the MurCDEF family.

The protein localises to the cytoplasm. The catalysed reaction is UDP-N-acetyl-alpha-D-muramate + L-alanine + ATP = UDP-N-acetyl-alpha-D-muramoyl-L-alanine + ADP + phosphate + H(+). Its pathway is cell wall biogenesis; peptidoglycan biosynthesis. Cell wall formation. The sequence is that of UDP-N-acetylmuramate--L-alanine ligase from Lactobacillus acidophilus (strain ATCC 700396 / NCK56 / N2 / NCFM).